Here is a 543-residue protein sequence, read N- to C-terminus: Ipecac alkaloid beta-glucosidase 3 (543 aa).

A beta-D-glucoside contacts are provided by residues Q36, H140, 185–186 (NE), Y350, E422, W471, and F487. E186 (proton donor) is an active-site residue. Catalysis depends on E422, which acts as the Nucleophile.

This sequence belongs to the glycosyl hydrolase 1 family.

The protein resides in the cytoplasm. Its subcellular location is the cytosol. It catalyses the reaction deacetylipecoside + H2O = deacetylipecoside aglycone + D-glucose. The catalysed reaction is deacetylisoipecoside + H2O = deacetylisoipecoside aglycone + D-glucose. It participates in alkaloid biosynthesis. In terms of biological role, beta-glucosidase catalyzing deglucosylation on N-deacetylisoipecoside and N-deacetylipecoside. The sequence is that of Ipecac alkaloid beta-glucosidase 3 from Carapichea ipecacuanha (Ipecac).